The chain runs to 306 residues: Arginase (306 aa).

His96, Asp123, His125, and Asp127 together coordinate Mn(2+). Residues 125–129 (HTDFH), 136–138 (SGN), and Asp178 contribute to the substrate site. Mn(2+)-binding residues include Asp226 and Asp228. Thr240 and Glu271 together coordinate substrate.

It belongs to the arginase family. It depends on Mn(2+) as a cofactor.

The catalysed reaction is L-arginine + H2O = urea + L-ornithine. Its pathway is nitrogen metabolism; urea cycle; L-ornithine and urea from L-arginine: step 1/1. In Brucella abortus biovar 1 (strain 9-941), this protein is Arginase (arcB).